Reading from the N-terminus, the 465-residue chain is Coumaroyl-CoA:anthocyanidin 3-O-glucoside-6''-O-coumaroyltransferase 2 (465 aa).

Met1 is modified (N-acetylmethionine). Active-site proton acceptor residues include His173 and Asp406.

This sequence belongs to the plant acyltransferase family. Highly expressed in flowers, and leaves. Lower levels of expression in stems, roots and siliques.

Functionally, involved in the acylation of the 6'' position of the 3-O-glucose residue of anthocyanin. Also able to use flavonol 3-glucosides as the acyl acceptor. In Arabidopsis thaliana (Mouse-ear cress), this protein is Coumaroyl-CoA:anthocyanidin 3-O-glucoside-6''-O-coumaroyltransferase 2 (3AT2).